The primary structure comprises 167 residues: Protein DLS1 (167 aa).

Ser-17 carries the post-translational modification Phosphoserine.

In terms of assembly, component of the ISW2 complex, which at least consists of ISW2, ITC1, DLS1 and DPB4.

The protein localises to the nucleus. Functionally, functions as a component of the ISW2 complex, which acts in remodeling the chromatin by catalyzing an ATP-dependent alteration in the structure of nucleosomal DNA. The ISW2 complex is involved in coordinating transcriptional repression and in inheritance of telomeric silencing. It is involved in repression of MAT a-specific genes, INO1, and early meiotic genes during mitotic growth dependent upon transcription factor UME6 and in a parallel pathway to the RPD3-SIN3 histone deacetylase complex. DLS1 is partially required for the ISW2 complex chromatin remodeling activity and is not required for its interaction with chromatin. The chain is Protein DLS1 (DLS1) from Saccharomyces cerevisiae (strain ATCC 204508 / S288c) (Baker's yeast).